Reading from the N-terminus, the 187-residue chain is UPF0301 protein GOX1459 (187 aa).

It belongs to the UPF0301 (AlgH) family.

This is UPF0301 protein GOX1459 from Gluconobacter oxydans (strain 621H) (Gluconobacter suboxydans).